We begin with the raw amino-acid sequence, 272 residues long: Dermonecrotic toxin LvSicTox-alphaIC1biv (272 aa).

Residue His-5 is part of the active site. Residues Glu-25 and Asp-27 each coordinate Mg(2+). Residue His-41 is the Nucleophile of the active site. Disulfide bonds link Cys-45–Cys-51 and Cys-47–Cys-189. Asp-84 contributes to the Mg(2+) binding site.

This sequence belongs to the arthropod phospholipase D family. Class II subfamily. Mg(2+) is required as a cofactor. In terms of tissue distribution, expressed by the venom gland.

The protein resides in the secreted. The enzyme catalyses an N-(acyl)-sphingosylphosphocholine = an N-(acyl)-sphingosyl-1,3-cyclic phosphate + choline. It catalyses the reaction an N-(acyl)-sphingosylphosphoethanolamine = an N-(acyl)-sphingosyl-1,3-cyclic phosphate + ethanolamine. The catalysed reaction is a 1-acyl-sn-glycero-3-phosphocholine = a 1-acyl-sn-glycero-2,3-cyclic phosphate + choline. It carries out the reaction a 1-acyl-sn-glycero-3-phosphoethanolamine = a 1-acyl-sn-glycero-2,3-cyclic phosphate + ethanolamine. Its function is as follows. Dermonecrotic toxins cleave the phosphodiester linkage between the phosphate and headgroup of certain phospholipids (sphingolipid and lysolipid substrates), forming an alcohol (often choline) and a cyclic phosphate. This toxin acts on sphingomyelin (SM). It may also act on ceramide phosphoethanolamine (CPE), lysophosphatidylcholine (LPC) and lysophosphatidylethanolamine (LPE), but not on lysophosphatidylserine (LPS), and lysophosphatidylglycerol (LPG). It acts by transphosphatidylation, releasing exclusively cyclic phosphate products as second products. Induces dermonecrosis, hemolysis, increased vascular permeability, edema, inflammatory response, and platelet aggregation. This Loxosceles variegata (Recluse spider) protein is Dermonecrotic toxin LvSicTox-alphaIC1biv.